We begin with the raw amino-acid sequence, 296 residues long: Cbb3-type cytochrome c oxidase subunit CcoP (296 aa).

Over 1 to 31 (MAQNYKDELSGVETTGHEWDGLRELNNPLPK) the chain is Cytoplasmic. The helical transmembrane segment at 32–52 (WWLYLFYVCIAWAMVYYVFYP) threads the bilayer. The Periplasmic portion of the chain corresponds to 53–296 (AWPLGKTYTK…VYVHNLGGGK (244 aa)). 2 Cytochrome c domains span residues 108–200 (FAMA…LSLN) and 207–293 (GKVA…HNLG). Heme c-binding residues include Cys-121, Cys-124, His-125, Met-175, Cys-220, Cys-223, His-224, and Met-270.

The protein belongs to the CcoP / FixP family. In terms of assembly, component of the cbb3-type cytochrome c oxidase at least composed of CcoN, CcoO, CcoQ and CcoP. The cofactor is heme c.

The protein localises to the cell inner membrane. It participates in energy metabolism; oxidative phosphorylation. Functionally, C-type cytochrome. Part of the cbb3-type cytochrome c oxidase complex. CcoP subunit is required for transferring electrons from donor cytochrome c via its heme groups to CcoO subunit. From there, electrons are shuttled to the catalytic binuclear center of CcoN subunit where oxygen reduction takes place. The complex also functions as a proton pump. The polypeptide is Cbb3-type cytochrome c oxidase subunit CcoP (Azospirillum sp. (strain B510)).